The following is a 422-amino-acid chain: Serine hydroxymethyltransferase (422 aa).

(6S)-5,6,7,8-tetrahydrofolate-binding positions include Leu-113 and 117–119; that span reads GHL. Lys-222 bears the N6-(pyridoxal phosphate)lysine mark.

The protein belongs to the SHMT family. As to quaternary structure, homodimer. Pyridoxal 5'-phosphate is required as a cofactor.

It localises to the cytoplasm. It catalyses the reaction (6R)-5,10-methylene-5,6,7,8-tetrahydrofolate + glycine + H2O = (6S)-5,6,7,8-tetrahydrofolate + L-serine. It participates in one-carbon metabolism; tetrahydrofolate interconversion. Its pathway is amino-acid biosynthesis; glycine biosynthesis; glycine from L-serine: step 1/1. Its function is as follows. Catalyzes the reversible interconversion of serine and glycine with tetrahydrofolate (THF) serving as the one-carbon carrier. This reaction serves as the major source of one-carbon groups required for the biosynthesis of purines, thymidylate, methionine, and other important biomolecules. Also exhibits THF-independent aldolase activity toward beta-hydroxyamino acids, producing glycine and aldehydes, via a retro-aldol mechanism. This chain is Serine hydroxymethyltransferase, found in Amoebophilus asiaticus (strain 5a2).